Here is a 312-residue protein sequence, read N- to C-terminus: Ribosomal RNA small subunit methyltransferase H (312 aa).

Residues 33-35, Asp-53, Phe-80, Asp-101, and Gln-108 contribute to the S-adenosyl-L-methionine site; that span reads SGH.

This sequence belongs to the methyltransferase superfamily. RsmH family.

It localises to the cytoplasm. The enzyme catalyses cytidine(1402) in 16S rRNA + S-adenosyl-L-methionine = N(4)-methylcytidine(1402) in 16S rRNA + S-adenosyl-L-homocysteine + H(+). Its function is as follows. Specifically methylates the N4 position of cytidine in position 1402 (C1402) of 16S rRNA. The chain is Ribosomal RNA small subunit methyltransferase H from Desulforapulum autotrophicum (strain ATCC 43914 / DSM 3382 / VKM B-1955 / HRM2) (Desulfobacterium autotrophicum).